We begin with the raw amino-acid sequence, 323 residues long: UPF0612 protein C569.01c (323 aa).

Coiled-coil stretches lie at residues 27 to 63 and 131 to 225; these read IKRY…MKYE and NEMN…DARS.

Belongs to the UPF0612 family.

The sequence is that of UPF0612 protein C569.01c from Schizosaccharomyces pombe (strain 972 / ATCC 24843) (Fission yeast).